Reading from the N-terminus, the 577-residue chain is DNA primase (577 aa).

The CHC2-type zinc finger occupies 40–64; sequence CPFHHDKTPSFTVSNEKQFYYCFGC. One can recognise a Toprim domain in the interval 255-337; sequence VYLLVVEGYI…KKTLKFILLP (83 aa). Residues E261, D305, and D307 each coordinate Mg(2+).

This sequence belongs to the DnaG primase family. Monomer. Interacts with DnaB. The cofactor is Zn(2+). Mg(2+) is required as a cofactor.

The catalysed reaction is ssDNA + n NTP = ssDNA/pppN(pN)n-1 hybrid + (n-1) diphosphate.. RNA polymerase that catalyzes the synthesis of short RNA molecules used as primers for DNA polymerase during DNA replication. This Buchnera aphidicola subsp. Acyrthosiphon pisum (strain APS) (Acyrthosiphon pisum symbiotic bacterium) protein is DNA primase.